The sequence spans 359 residues: Probable dual-specificity RNA methyltransferase RlmN (359 aa).

Glu99 serves as the catalytic Proton acceptor. One can recognise a Radical SAM core domain in the interval 105–342; that stretch reads TENRRTACVS…VTIRKSYGTT (238 aa). Cysteines 112 and 347 form a disulfide. The [4Fe-4S] cluster site is built by Cys119, Cys123, and Cys126. Residues 171 to 172, Ser204, 227 to 229, and Asn304 contribute to the S-adenosyl-L-methionine site; these read GE and SLH. Catalysis depends on Cys347, which acts as the S-methylcysteine intermediate.

The protein belongs to the radical SAM superfamily. RlmN family. It depends on [4Fe-4S] cluster as a cofactor.

Its subcellular location is the cytoplasm. It carries out the reaction adenosine(2503) in 23S rRNA + 2 reduced [2Fe-2S]-[ferredoxin] + 2 S-adenosyl-L-methionine = 2-methyladenosine(2503) in 23S rRNA + 5'-deoxyadenosine + L-methionine + 2 oxidized [2Fe-2S]-[ferredoxin] + S-adenosyl-L-homocysteine. The enzyme catalyses adenosine(37) in tRNA + 2 reduced [2Fe-2S]-[ferredoxin] + 2 S-adenosyl-L-methionine = 2-methyladenosine(37) in tRNA + 5'-deoxyadenosine + L-methionine + 2 oxidized [2Fe-2S]-[ferredoxin] + S-adenosyl-L-homocysteine. Specifically methylates position 2 of adenine 2503 in 23S rRNA and position 2 of adenine 37 in tRNAs. The polypeptide is Probable dual-specificity RNA methyltransferase RlmN (Pelodictyon phaeoclathratiforme (strain DSM 5477 / BU-1)).